Reading from the N-terminus, the 253-residue chain is Low affinity immunoglobulin gamma Fc region receptor III-A (253 aa).

Residues 1-20 form the signal peptide; that stretch reads MGQPLPPVALLLLVSASSRA. The Extracellular segment spans residues 21 to 207; that stretch reads ADVPKALVLL…ISSSVLPWHQ (187 aa). 2 Ig-like C2-type domains span residues 24–90 and 99–189; these read PKAL…YRCQ and PVQL…VTIT. Cystine bridges form between C47–C89 and C128–C172. Residues N56, N63, N165, and N180 are each glycosylated (N-linked (GlcNAc...) asparagine). Residues 208-226 traverse the membrane as a helical segment; it reads IAFCLVMGLLLAADTGLYF. Over 227–253 the chain is Cytoplasmic; it reads SVQRDLRSSQRARKEHTLGWSLGSQDK.

As to quaternary structure, forms a heterooligomeric complex with ITAM-containing signaling subunits FCER1G. Interacts (via transmembrane domain) with signaling subunits; this interaction is a prerequisite for receptor complex expression on the cell surface and intracellular signal transduction. Binds the Fc region of antigen-complexed IgG.

It is found in the cell membrane. In terms of biological role, receptor for the invariable Fc fragment of immunoglobulin gamma (IgG). Optimally activated upon binding of clustered antigen-IgG complexes displayed on cell surfaces, triggers lysis of antibody-coated cells, a process known as antibody-dependent cellular cytotoxicity (ADCC). Does not bind free monomeric IgG, thus avoiding inappropriate effector cell activation in the absence of antigenic trigger. Mediates IgG effector functions on natural killer (NK) cells. Binds antigen-IgG complexes generated upon infection and triggers NK cell-dependent cytokine production and degranulation to limit viral load and propagation. Fc-binding subunit that associates with FCER1G adapter to form functional signaling complexes. Following the engagement of antigen-IgG complexes, triggers phosphorylation of immunoreceptor tyrosine-based activation motif (ITAM)-containing adapters with subsequent activation of phosphatidylinositol 3-kinase signaling and sustained elevation of intracellular calcium that ultimately drive NK cell activation. Mediates enhanced ADCC in response to afucosylated IgGs. The polypeptide is Low affinity immunoglobulin gamma Fc region receptor III-A (Oryctolagus cuniculus (Rabbit)).